A 400-amino-acid chain; its full sequence is Capsid protein (400 aa).

The segment covering M1 to L10 has biased composition (polar residues). The tract at residues M1–P54 is disordered. Positions I16–P28 are enriched in acidic residues.

It belongs to the potexvirus capsid protein family.

It is found in the virion. In terms of biological role, required for genome encapsidation. In Botryotinia fuckeliana (Noble rot fungus), this protein is Capsid protein (ORF3).